Reading from the N-terminus, the 253-residue chain is 5'-nucleotidase SurE (253 aa).

A divalent metal cation contacts are provided by Asp-8, Asp-9, Ser-40, and Asn-92.

Belongs to the SurE nucleotidase family. A divalent metal cation is required as a cofactor.

The protein resides in the cytoplasm. It catalyses the reaction a ribonucleoside 5'-phosphate + H2O = a ribonucleoside + phosphate. Its function is as follows. Nucleotidase that shows phosphatase activity on nucleoside 5'-monophosphates. In Hyphomonas neptunium (strain ATCC 15444), this protein is 5'-nucleotidase SurE.